Consider the following 486-residue polypeptide: UDP-N-acetylmuramoyl-L-alanyl-D-glutamate--2,6-diaminopimelate ligase (486 aa).

Ser-26 is a UDP-N-acetyl-alpha-D-muramoyl-L-alanyl-D-glutamate binding site. 104–110 (GTNGKTS) is an ATP binding site. Residues 152–153 (TT), Ser-179, Gln-185, and Arg-187 each bind UDP-N-acetyl-alpha-D-muramoyl-L-alanyl-D-glutamate. An N6-carboxylysine modification is found at Lys-219. Residues Arg-383, 407-410 (DNPR), Gly-455, and Glu-459 each bind meso-2,6-diaminopimelate. The Meso-diaminopimelate recognition motif signature appears at 407–410 (DNPR).

It belongs to the MurCDEF family. MurE subfamily. Mg(2+) serves as cofactor. In terms of processing, carboxylation is probably crucial for Mg(2+) binding and, consequently, for the gamma-phosphate positioning of ATP.

It is found in the cytoplasm. It catalyses the reaction UDP-N-acetyl-alpha-D-muramoyl-L-alanyl-D-glutamate + meso-2,6-diaminopimelate + ATP = UDP-N-acetyl-alpha-D-muramoyl-L-alanyl-gamma-D-glutamyl-meso-2,6-diaminopimelate + ADP + phosphate + H(+). The protein operates within cell wall biogenesis; peptidoglycan biosynthesis. In terms of biological role, catalyzes the addition of meso-diaminopimelic acid to the nucleotide precursor UDP-N-acetylmuramoyl-L-alanyl-D-glutamate (UMAG) in the biosynthesis of bacterial cell-wall peptidoglycan. In Caulobacter vibrioides (strain ATCC 19089 / CIP 103742 / CB 15) (Caulobacter crescentus), this protein is UDP-N-acetylmuramoyl-L-alanyl-D-glutamate--2,6-diaminopimelate ligase.